Here is a 754-residue protein sequence, read N- to C-terminus: Lysophospholipase 3 (754 aa).

The first 19 residues, 1–19 (MKVNLKLIIGSILISQAQA), serve as a signal peptide directing secretion. Composition is skewed to low complexity over residues 25 to 40 (SSGSSSSSDSSPSETG) and 50 to 88 (LFGSGSSLTQSSSAQASSTKSTSDSASSTDSSLFSSSNS). Residues 25-88 (SSGSSSSSDS…DSSLFSSSNS (64 aa)) are disordered. N-linked (GlcNAc...) asparagine glycosylation is found at Asn112, Asn156, Asn174, Asn317, Asn325, Asn354, Asn391, Asn423, Asn470, Asn510, Asn515, Asn560, Asn577, Asn597, Asn625, and Asn631. The PLA2c domain maps to 114 to 670 (TCPSKKTFIR…QEYCWTGGFK (557 aa)). Residues 687-721 (KTHTSGGTSSTTQQTSTTTGSSANGGSSSTGSSSS) are compositionally biased toward low complexity. Positions 687-727 (KTHTSGGTSSTTQQTSTTTGSSANGGSSSTGSSSSSKKKNG) are disordered.

It belongs to the lysophospholipase family.

The protein resides in the secreted. It catalyses the reaction a 1-acyl-sn-glycero-3-phosphocholine + H2O = sn-glycerol 3-phosphocholine + a fatty acid + H(+). In terms of biological role, catalyzes the release of fatty acids from lysophospholipids. Phospholipase B may well contribute to pathogenicity by abetting the fungus in damaging and traversing host cell membranes, processes which likely increase the rapidity of disseminated infection. This is Lysophospholipase 3 (PLB3) from Candida albicans (Yeast).